The chain runs to 504 residues: Arabinose import ATP-binding protein AraG (504 aa).

2 ABC transporter domains span residues Leu8–Arg243 and Tyr256–Val499. Gly40–Ser47 serves as a coordination point for ATP.

It belongs to the ABC transporter superfamily. Arabinose importer (TC 3.A.1.2.2) family. The complex is composed of two ATP-binding proteins (AraG), two transmembrane proteins (AraH) and a solute-binding protein (AraF).

Its subcellular location is the cell inner membrane. It carries out the reaction L-arabinose(out) + ATP + H2O = L-arabinose(in) + ADP + phosphate + H(+). Part of the ABC transporter complex AraFGH involved in arabinose import. Responsible for energy coupling to the transport system. In Shigella flexneri, this protein is Arabinose import ATP-binding protein AraG.